The following is a 364-amino-acid chain: D-alanine--D-alanine ligase A (364 aa).

The ATP-grasp domain maps to 145 to 348 (KRLLRDAGLN…YTDLITRLIE (204 aa)). ATP is bound at residue 175–230 (ESKLGLPLFVKPANQGSSVGVSKVTSEEQYTIAVDLAFEFDHKVIVEQGIKGREIE). Mg(2+)-binding residues include Asp-302, Glu-315, and Asn-317.

The protein belongs to the D-alanine--D-alanine ligase family. Requires Mg(2+) as cofactor. It depends on Mn(2+) as a cofactor.

Its subcellular location is the cytoplasm. It carries out the reaction 2 D-alanine + ATP = D-alanyl-D-alanine + ADP + phosphate + H(+). Its pathway is cell wall biogenesis; peptidoglycan biosynthesis. Its function is as follows. Cell wall formation. The sequence is that of D-alanine--D-alanine ligase A from Escherichia coli O6:H1 (strain CFT073 / ATCC 700928 / UPEC).